Here is a 347-residue protein sequence, read N- to C-terminus: Ryncolin-3 (347 aa).

Positions 1-19 (MKPWAAFHLIFLVASSVEG) are cleaved as a signal peptide. Residues 57-114 (GIPGVPGINGSEGLKGDPGPQGLPGETGFDGIPGVAGPKGDKGDQGDKGDKGDKGDKG) form the Collagen-like domain. Positions 62–115 (PGINGSEGLKGDPGPQGLPGETGFDGIPGVAGPKGDKGDQGDKGDKGDKGDKGD) are disordered. Positions 95–115 (KGDKGDQGDKGDKGDKGDKGD) are enriched in basic and acidic residues. Positions 121–341 (DCPPTDVEVR…YADMKIRPQQ (221 aa)) constitute a Fibrinogen C-terminal domain. Disulfide bonds link C132–C160 and C284–C297.

It belongs to the ficolin lectin family. Veficolin subfamily. Post-translationally, hydroxylated. As to expression, expressed by the venom duct.

Its subcellular location is the secreted. Its function is as follows. Initiates complement activation and/or interferes in platelet aggregation and/or blood coagulation. The sequence is that of Ryncolin-3 from Cerberus rynchops (Dog-faced water snake).